Consider the following 308-residue polypeptide: Dual oxidase maturation factor 1 (308 aa).

The Extracellular portion of the chain corresponds to 1–21 (MQANIFPFYPQPRTPFKFDTK). Residues 22–42 (IIEIIIICIVTACTFIIILPG) form a helical membrane-spanning segment. At 43 to 49 (IRGKSRS) the chain is on the cytoplasmic side. A helical transmembrane segment spans residues 50–70 (IWLLRILTSLFIGAVILAVNF). At 71–91 (TSDWEMGTITATTVYKSFSHS) the chain is on the extracellular side. A helical transmembrane segment spans residues 92-112 (MLNASIGLWIGLKGLNITLIG). The Cytoplasmic segment spans residues 113 to 175 (NPEYQLNETI…GLFQQYCIST (63 aa)). The chain crosses the membrane as a helical span at residues 176-198 (YYSSGIMWIAFCSWILYNVLFSM). Residue Pro199 is a topological domain, extracellular. A helical transmembrane segment spans residues 200–220 (VILYGIYMMFVTAICMLVSLI). Topologically, residues 221 to 247 (SFASVRKAPVCNIQFGNSILKTHFGVS) are cytoplasmic. Residues 248 to 268 (YWLSLITGLLCLIISLVLLFL) form a helical membrane-spanning segment. Over 269–308 (YKTQPKVLQLIFSYGEEEDLSNKSENEEEHSSVLSLNEIL) the chain is Extracellular. N-linked (GlcNAc...) asparagine glycosylation is present at Asn290.

It belongs to the DUOXA family.

It is found in the membrane. Possible role in maturation and transport from the endoplasmic reticulum to the plasma membrane of functional dual oxidase. This is Dual oxidase maturation factor 1 (duoxa1) from Xenopus laevis (African clawed frog).